The following is a 344-amino-acid chain: SUMO-activating enzyme subunit 1 (344 aa).

Belongs to the ubiquitin-activating E1 family. As to quaternary structure, heterodimer of sae1 and uba2/sae2. The heterodimer corresponds to the two domains that are encoded on a single polypeptide chain in ubiquitin-activating enzyme E1. Interacts with ube2i.

Its subcellular location is the nucleus. It functions in the pathway protein modification; protein sumoylation. In terms of biological role, the heterodimer acts as an E1 ligase for sumo1, sumo2, and sumo3. It mediates ATP-dependent activation of sumo proteins followed by formation of a thioester bond between a sumo protein and a conserved active site cysteine residue on uba2/sae2. This chain is SUMO-activating enzyme subunit 1 (sae1), found in Xenopus laevis (African clawed frog).